The following is a 326-amino-acid chain: Tryptophan--tRNA ligase (326 aa).

Residues 11–13 (QPT) and 19–20 (GN) each bind ATP. Residues 12-20 (PTGQIHLGN) carry the 'HIGH' region motif. Asp-135 contributes to the L-tryptophan binding site. ATP-binding positions include 147-149 (GED), Val-186, and 195-199 (KMSKS). The short motif at 195–199 (KMSKS) is the 'KMSKS' region element.

It belongs to the class-I aminoacyl-tRNA synthetase family. Homodimer.

It localises to the cytoplasm. It carries out the reaction tRNA(Trp) + L-tryptophan + ATP = L-tryptophyl-tRNA(Trp) + AMP + diphosphate + H(+). Its function is as follows. Catalyzes the attachment of tryptophan to tRNA(Trp). This Helicobacter pylori (strain J99 / ATCC 700824) (Campylobacter pylori J99) protein is Tryptophan--tRNA ligase.